A 304-amino-acid polypeptide reads, in one-letter code: Non-specific ribonucleoside hydrolase RihC (304 aa).

Histidine 233 is an active-site residue.

Belongs to the IUNH family. RihC subfamily.

In terms of biological role, hydrolyzes both purine and pyrimidine ribonucleosides with a broad-substrate specificity. The polypeptide is Non-specific ribonucleoside hydrolase RihC (Escherichia coli O8 (strain IAI1)).